A 228-amino-acid chain; its full sequence is Glycosylphosphatidylinositol-anchored high density lipoprotein-binding protein 1 (228 aa).

The N-terminal stretch at 1–22 (MKALRAVLLILLLSGQPGSGWA) is a signal peptide. Positions 21-32 (WAQEDGDADPEP) are disordered. The important for LPL transport to the lumenal surface of endothelial cells stretch occupies residues 24–48 (EDGDADPEPENYNYDDDDDEEEEEE). The segment covering 24–49 (EDGDADPEPENYNYDDDDDEEEEEET) has biased composition (acidic residues). The residue at position 35 (Y35) is a Sulfotyrosine. In terms of domain architecture, UPAR/Ly6 spans 61–148 (LQCYFCQVLH…PWQNPQVQNP (88 aa)). 5 disulfides stabilise this stretch: C63-C88, C66-C75, C81-C109, C113-C129, and C130-C135. The N-linked (GlcNAc...) asparagine glycan is linked to N76. The interval 102–108 (LTTYSMW) is important for interaction with LPL. Positions 145-200 (VQNPLGGRADSPLESGTRHPQGGKFSHPQVVKAAHPQSDGANLPKSGKANQPQGSG) are disordered. G198 carries GPI-anchor amidated glycine lipidation. Positions 199 to 228 (SGAGYPSGWTKFGNIALLLSFFTCLWASGA) are cleaved as a propeptide — removed in mature form.

As to quaternary structure, mostly monomer, but also homodimer and homooligomer. Interacts with lipoprotein lipase (LPL). Interacts with high affinity with high-density lipoprotein (HDL). Interacts with chylomicrons. Interacts with APOA5. Glycosylation of Asn-76 is critical for cell surface localization. Post-translationally, sulfation of a Tyr in the N-terminal acidic region increases the affinity for LPL. As to expression, detected in fat tissue. Detected on the luminal surface of capillary endothelial cells in heart, skeletal muscle and brown adipose tissue (at protein level). Detected in heart and brown adipose tissue. Expressed at lower levels in lung and liver.

The protein localises to the apical cell membrane. Its subcellular location is the basolateral cell membrane. The protein resides in the cell membrane. Mediates the transport of lipoprotein lipase LPL from the basolateral to the apical surface of endothelial cells in capillaries. Anchors LPL on the surface of endothelial cells in the lumen of blood capillaries. Thereby, plays an important role in lipolytic processing of chylomicrons by LPL, triglyceride metabolism and lipid homeostasis. Binds chylomicrons and phospholipid particles that contain APOA5. Binds high-density lipoprotein (HDL) and plays a role in the uptake of lipids from HDL. This Mus musculus (Mouse) protein is Glycosylphosphatidylinositol-anchored high density lipoprotein-binding protein 1.